The following is a 440-amino-acid chain: Lipopolysaccharide-processing protein LpsZ (440 aa).

It to E.coli capsule polysaccharide export protein KpsC.

The protein localises to the cytoplasm. In terms of biological role, involved in the invasion of nitrogen fixation nodules. May be involved in the biosynthesis of lipopolysaccharides as an enzyme or a regulatory protein. This Rhizobium meliloti (Ensifer meliloti) protein is Lipopolysaccharide-processing protein LpsZ (lpsZ).